The following is a 361-amino-acid chain: MEHNGSASNADKIHQNRLSNVTEDEDQDAALTIVTVLDKVAAIVDSVQASQKRIEERHRVMENAIKSVQIDLLKFSQSHSNTGYVINKLFEKTRKVSAHIKDVKARVEKQQTHVKKVEAKQEEIMKKNKFRVVIFQEEVQCPTSLSVVKDRSLTESPEEVDEIFDTPVDLSSDEEYFVEESRSARLKKSGKERIDNIKKAFSKENMQKTRQNFDKKVNRIRTRIVTPERRERLRQSGERLRQSGERLKQSGERFKKSISNAAPSREAFKMRSLRKTKDRAVAEGPEEVREMGVDIIARGEALGPISELYPEALSETDPEEASATHPPQEGGEVSTPEPLKVTFKPQVKVEDDESLLLDLKQ.

Residues 1–21 (MEHNGSASNADKIHQNRLSNV) form a disordered region. Residues 100 to 124 (IKDVKARVEKQQTHVKKVEAKQEEI) are a coiled coil. Ser-152, Ser-171, and Ser-172 each carry phosphoserine. The stretch at 204–248 (ENMQKTRQNFDKKVNRIRTRIVTPERRERLRQSGERLRQSGERLK) forms a coiled coil. Basic and acidic residues predominate over residues 230-255 (RERLRQSGERLRQSGERLKQSGERFK). Disordered regions lie at residues 230–283 (RERL…AVAE) and 310–346 (PEAL…FKPQ). Phosphothreonine is present on Thr-335. Position 354 is a phosphoserine (Ser-354).

The protein belongs to the CAVIN family. Component of the CAVIN complex composed of CAVIN1, CAVIN2, CAVIN3 and CAVIN4. Interacts with CAVIN1, ADRA1A, ADRA1B, MAPK1 and MAPK3. Interacts with CAVIN2; this augments the transactivation of NPPA.

The protein localises to the cytoplasm. It localises to the myofibril. It is found in the sarcomere. Its subcellular location is the cytosol. The protein resides in the cell membrane. The protein localises to the sarcolemma. It localises to the membrane. It is found in the caveola. In terms of biological role, modulates the morphology of formed caveolae in cardiomyocytes, but is not required for caveolar formation. Facilitates the recruitment of MAPK1/3 to caveolae within cardiomyocytes and regulates alpha-1 adrenergic receptor-induced hypertrophic responses in cardiomyocytes through MAPK1/3 activation. Contributes to proper membrane localization and stabilization of caveolin-3 (CAV3) in cardiomyocytes. Induces RHOA activation and activates NPPA transcription and myofibrillar organization through the Rho/ROCK signaling pathway. In Bos taurus (Bovine), this protein is Caveolae-associated protein 4 (CAVIN4).